The chain runs to 1859 residues: U3 small nucleolar RNA-associated protein 10 (1859 aa).

A helical membrane pass occupies residues 258 to 278 (LGAYSVLAVLSAVAPLSIELL). The HEAT 1 repeat unit spans residues 578–616 (VLPLLLIAFNDPSSHIRAAFAQLVQLVSEITKAIHENKK). A helical transmembrane segment spans residues 1392–1412 (IVIASISAIVSIVNVLGIKTL). The HEAT 2 repeat unit spans residues 1819–1857 (LVPHIAELLEDDDEAVEIEVREGLVRVIEKVLGEPLDRY).

Belongs to the HEATR1/UTP10 family. Component of the ribosomal small subunit (SSU) processome.

It is found in the nucleus. The protein resides in the nucleolus. The protein localises to the membrane. Functionally, involved in nucleolar processing of pre-18S ribosomal RNA. Involved in ribosome biosynthesis. The polypeptide is U3 small nucleolar RNA-associated protein 10 (Lodderomyces elongisporus (strain ATCC 11503 / CBS 2605 / JCM 1781 / NBRC 1676 / NRRL YB-4239) (Yeast)).